Here is a 298-residue protein sequence, read N- to C-terminus: 4-hydroxy-tetrahydrodipicolinate synthase (298 aa).

T51 provides a ligand contact to pyruvate. Y140 serves as the catalytic Proton donor/acceptor. Catalysis depends on K168, which acts as the Schiff-base intermediate with substrate. I210 is a binding site for pyruvate.

Belongs to the DapA family. In terms of assembly, homotetramer; dimer of dimers.

Its subcellular location is the cytoplasm. The catalysed reaction is L-aspartate 4-semialdehyde + pyruvate = (2S,4S)-4-hydroxy-2,3,4,5-tetrahydrodipicolinate + H2O + H(+). The protein operates within amino-acid biosynthesis; L-lysine biosynthesis via DAP pathway; (S)-tetrahydrodipicolinate from L-aspartate: step 3/4. In terms of biological role, catalyzes the condensation of (S)-aspartate-beta-semialdehyde [(S)-ASA] and pyruvate to 4-hydroxy-tetrahydrodipicolinate (HTPA). This Acidovorax sp. (strain JS42) protein is 4-hydroxy-tetrahydrodipicolinate synthase.